The primary structure comprises 358 residues: Protein UL24 (358 aa).

It belongs to the herpesviridae US22 family.

It is found in the virion tegument. This is Protein UL24 (UL24) from Homo sapiens (Human).